We begin with the raw amino-acid sequence, 757 residues long: MADSSCSLPPLYENISYKSYILRAVDLTILGLLFSLLLHRILYMSQNGIIWLVAFLCESCFSFVWLLSTCTKWSPAETKPYPDRLDERVYDLPSVDMFVPTADPVREPPIMVVNTVLSLLAVNYPANKLACYVSDDGCSPLTYFSLKEASKFAKIWVPFCKKYNLKVRAPFRYFLNPFAATEGSEFSRDWEMTKREYEKLCRKVEDATGDSHLLGTDNELEAFSNTKPNDHSTIIKVVWENKGGVGDEKEVPHIVYISREKRPNYLHHYKAGAMNFLARVSGLMTNAPYMLNVDCDMYANEADVVRQAMCIFLQKSQNQNHCAFVQFPQEFYDSNTIKLTVIKSYMGRGIAGIQGPINVGSGCFHSRRVMYGLSPDELEDNGSLSSVATRELLAEDSLSSGFGNSKEMVTSVVEALQRKPNPQNILTNSIEAAQEVGHCDYESQTSWGKTIGWLYDSMSEDMNTSIGIHSRGWTSSYIAPDPPAFLGSMPPGGLEAMIQQRRWATGSIEVLFNKQSPLLGLFCRKLRFRQRVAYLCVSICVRSIPELIYCLLPAYCLLHNSALFPKGLCLGITMLLAGMHCLYTLWEFMCLGHSIQSWYVSQSFWRIVATSSWLFSIFDIILKLLGLSKNVFLVSKKTMPVETMSGSGIGPSQREDDGPNSGKTEFDGSLYFLPGTFIVLVNLAALVGVFVGLQRSSYSHGGGGSGLGEACACILVVMLFFPFLKGLFAKGKYGIPLSTLSKAGFLAVSFVVFSVGN.

The next 2 membrane-spanning stretches (helical) occupy residues 24 to 44 and 48 to 68; these read AVDL…ILYM and GIIW…WLLS. Catalysis depends on residues Asp136 and Asp461. Transmembrane regions (helical) follow at residues 533–555, 568–588, 607–627, 672–692, 704–724, and 735–755; these read AYLC…LPAY, LCLG…LWEF, IVAT…LLGL, FLPG…VFVG, GSGL…FPFL, and IPLS…VFSV.

It belongs to the glycosyltransferase 2 family. Plant cellulose synthase-like B subfamily. In terms of tissue distribution, expressed in young seedlings, primarily in the root vascular tissue.

The protein resides in the golgi apparatus membrane. Its function is as follows. Thought to be a Golgi-localized beta-glycan synthase that polymerize the backbones of noncellulosic polysaccharides (hemicelluloses) of plant cell wall. In Arabidopsis thaliana (Mouse-ear cress), this protein is Cellulose synthase-like protein B2 (CSLB2).